A 96-amino-acid chain; its full sequence is C-C motif chemokine 1 (96 aa).

A signal peptide spans 1–23; it reads MQIITTALVCLLLAGMWPEDVDS. Cystine bridges form between Cys-33-Cys-57, Cys-34-Cys-73, and Cys-49-Cys-91. Asn-52 is a glycosylation site (N-linked (GlcNAc...) asparagine).

Belongs to the intercrine beta (chemokine CC) family. In terms of assembly, monomer.

The protein localises to the secreted. Cytokine that is chemotactic for monocytes but not for neutrophils. Binds to CCR8. The sequence is that of C-C motif chemokine 1 (CCL1) from Homo sapiens (Human).